Here is a 139-residue protein sequence, read N- to C-terminus: Histone H2AX (139 aa).

A disordered region spans residues 1–24; it reads MSSTATTKGGRGKPKASKSVSRSS. Serine 136 bears the Phosphoserine; by ATM and ATR mark. Positions 136–137 match the [ST]-Q motif motif; it reads SQ.

The protein belongs to the histone H2A family. The nucleosome is a histone octamer containing two molecules each of H2A, H2B, H3 and H4 assembled in one H3-H4 heterotetramer and two H2A-H2B heterodimers. The octamer wraps approximately 147 bp of DNA. Interacts with numerous proteins required for DNA damage signaling and repair when phosphorylated on Ser-136. Phosphorylated on Ser-136 (to form gamma-H2AX) in response to DNA double strand breaks (DSBs) generated by exogenous genotoxic agents and by stalled replication forks, and may also occur during meiotic recombination events. Phosphorylation can extend up to several thousand nucleosomes from the actual site of the DSB and may mark the surrounding chromatin for recruitment of proteins required for DNA damage signaling and repair. Widespread phosphorylation may also serve to amplify the damage signal or aid repair of persistent lesions. Phosphorylation of Ser-136 in response to ionizing radiation is mediated by ATM while defects in DNA replication induce Ser-136 phosphorylation subsequent to activation of ATR. Dephosphorylation of Ser-136 by PP2A is required for DNA DSB repair.

It is found in the nucleus. Its subcellular location is the chromosome. In terms of biological role, variant histone H2A which replaces conventional H2A in a subset of nucleosomes. Nucleosomes wrap and compact DNA into chromatin, limiting DNA accessibility to the cellular machineries which require DNA as a template. Histones thereby play a central role in transcription regulation, DNA repair, DNA replication and chromosomal stability. DNA accessibility is regulated via a complex set of post-translational modifications of histones, also called histone code, and nucleosome remodeling. Required for checkpoint-mediated arrest of cell cycle progression in response to low doses of ionizing radiation and for efficient repair of DNA double strand breaks (DSBs) specifically when modified by C-terminal phosphorylation. The protein is Histone H2AX (HIS2A) of Cicer arietinum (Chickpea).